The sequence spans 452 residues: MFSKFALTGSLLAGAVNAQGVGTQQTETHPQMTWQSCTSPSSCTTNQGEVVIDSNWRWVHDKDGYVNCYTGNTWNTTLCPDDKTCAANCVLDGADYSSTYGITTSGNALSLQFVTQSSGKNIGSRTYLMESSTKYHLFDLIGNEFAFDVDLSKLPCGLNGALYFVTMDADGGMAKYSTNTAGAEYGTGYCDSQCPRDLKFINGQGNVEGWTPSTNDANAGVGGLGSCCSEMDVWEANSMDMAYTPHPCETAAQHSCNADECGGTYSSSRYAGDCDPDGCDWNPFRMGNKDFYGSGDTVDTSQKFTVVTQFHGSGSSLTEISQYYIQGGTKIQQPNSTWPTLTGYNSITDDFCKAQKVEFNDTDVFSEKGGLAQMGAGMADGMVLVMSLWDDHYANMLWLDSTYPVDADASSPGKQRGTCATTSGVPADVESSDASATVIYSNIKFGPIGATY.

Residues 1–18 (MFSKFALTGSLLAGAVNA) form the signal peptide. Residue Asn-75 is glycosylated (N-linked (GlcNAc...) asparagine). Glu-230 functions as the Nucleophile in the catalytic mechanism. Glu-235 (proton donor) is an active-site residue. N-linked (GlcNAc...) asparagine glycans are attached at residues Asn-335 and Asn-360.

The protein belongs to the glycosyl hydrolase 7 (cellulase C) family.

The enzyme catalyses Hydrolysis of (1-&gt;4)-beta-D-glucosidic linkages in cellulose and cellotetraose, releasing cellobiose from the non-reducing ends of the chains.. Its function is as follows. The biological conversion of cellulose to glucose generally requires three types of hydrolytic enzymes: (1) Endoglucanases which cut internal beta-1,4-glucosidic bonds; (2) Exocellobiohydrolases that cut the disaccharide cellobiose from the non-reducing end of the cellulose polymer chain; (3) Beta-1,4-glucosidases which hydrolyze the cellobiose and other short cello-oligosaccharides to glucose. This Cryphonectria parasitica (Chestnut blight fungus) protein is Exoglucanase 1 (CBH-1).